Consider the following 318-residue polypeptide: MTETFKHQSVLLKETVDALNVQPDGIYVDATLGGGGHSEYLLSQLTTGHLYSFDQDDHALESSRQRLAKYADAGQVTFIKSNFRFLKIALAEQGITKIDGILYDLGVSSPQFDDAQRGFSYKKEAPLDMRMDQGAELTAYTVVNEWSYQQLIKIFFRYGEEKFSKQVARKIEQQREIAPIETTIQLADLIKEAIPAPARRTGGHPAKRIFQAIRIAVNDELGAIEDSVEQAIPLVKVGGRISIITFQSLEDRLVKTMFKEQATLPDIPKGLPIMPGTEKTVLKLVNRKPILPTEDELTVNHRAHSAKLRVAEKQKEID.

Residues 35-37 (GGH), D54, F83, D104, and Q111 each bind S-adenosyl-L-methionine.

This sequence belongs to the methyltransferase superfamily. RsmH family.

The protein localises to the cytoplasm. It catalyses the reaction cytidine(1402) in 16S rRNA + S-adenosyl-L-methionine = N(4)-methylcytidine(1402) in 16S rRNA + S-adenosyl-L-homocysteine + H(+). Functionally, specifically methylates the N4 position of cytidine in position 1402 (C1402) of 16S rRNA. This is Ribosomal RNA small subunit methyltransferase H from Latilactobacillus sakei subsp. sakei (strain 23K) (Lactobacillus sakei subsp. sakei).